An 884-amino-acid polypeptide reads, in one-letter code: Probable mixed-linked glucan synthase 9 (884 aa).

The segment covering 1–27 has biased composition (low complexity); sequence MALSPAAAGRTGRNNNNDAGLADPLLP. The segment at 1-34 is disordered; it reads MALSPAAAGRTGRNNNNDAGLADPLLPAGGGGGG. A run of 2 helical transmembrane segments spans residues 73 to 93 and 104 to 124; these read VLLH…VLFL and AMWL…TWLL. The active site involves Asp195. The substrate site is built by Asp396 and Asp398. Residue Asp565 is part of the active site. A run of 6 helical transmembrane segments spans residues 640 to 660, 672 to 692, 708 to 728, 765 to 785, 802 to 822, and 830 to 850; these read TAYP…VIWL, FSTY…IGLV, EQFY…HIVL, LLAP…AAAG, AGLV…LGIM, and CALF…FVAV.

It belongs to the glycosyltransferase 2 family. Plant cellulose synthase-like F subfamily.

The protein localises to the golgi apparatus membrane. Its function is as follows. May catalyze both beta-1,3 and beta-1,4 glycosidic linkage on beta-D-glucan. Essential for (1,3;1,4)-beta-D-glucans synthesis in grasses and cereals (Poaceae). The mixed-linked glucans (which are not present in walls of dicotyledons or most other monocotyledonous plants) are particularly important constituents of the walls of the starchy endosperm and aleurone cells of cereal grains such as oats, wheat, rice and barley. They can account for up to 70% by weight of the wall. The polypeptide is Probable mixed-linked glucan synthase 9 (CSLF9) (Oryza sativa subsp. japonica (Rice)).